We begin with the raw amino-acid sequence, 346 residues long: E3 ubiquitin-protein ligase RNF146-A (346 aa).

The segment at 37-75 (CAICLQTCVHPVSLPCKHVFCYLCVKGASWLGKRCALCR) adopts an RING-type zinc-finger fold. The 77-residue stretch at 91-167 (PELKAASRGN…EHGRRRKIKR (77 aa)) folds into the WWE domain. Disordered stretches follow at residues 195–240 (SSAD…GTSL) and 256–301 (ERSH…ALVA). Over residues 202-216 (SVPAQSGASVQSSSV) the composition is skewed to low complexity. A compositionally biased stretch (acidic residues) spans 281–295 (SIEETESDASSDSED).

As to quaternary structure, interacts with poly-ADP-ribosylated AXIN1, AXIN2, BLZF1 and CASC3. Ubiquitinated; autoubiquitinated. Autoubiquitination is enhanced upon poly(ADP-ribose)-binding.

Its subcellular location is the cytoplasm. It is found in the cytosol. It catalyses the reaction S-ubiquitinyl-[E2 ubiquitin-conjugating enzyme]-L-cysteine + [acceptor protein]-L-lysine = [E2 ubiquitin-conjugating enzyme]-L-cysteine + N(6)-ubiquitinyl-[acceptor protein]-L-lysine.. The protein operates within protein modification; protein ubiquitination. In terms of biological role, E3 ubiquitin-protein ligase that specifically binds poly-ADP-ribosylated proteins and mediates their ubiquitination and subsequent degradation. Acts as an activator of the Wnt signaling pathway by mediating the ubiquitination of poly-ADP-ribosylated AXIN1 and AXIN2, 2 key components of the beta-catenin destruction complex. Acts in cooperation with tankyrase proteins (TNKS and TNKS2), which mediate poly-ADP-ribosylation of target proteins AXIN1, AXIN2, BLZF1, CASC3, TNKS and TNKS2. Recognizes and binds tankyrase-dependent poly-ADP-ribosylated proteins via its WWE domain and mediates their ubiquitination. The sequence is that of E3 ubiquitin-protein ligase RNF146-A (RNF146A) from Bos taurus (Bovine).